The sequence spans 247 residues: MNCIFLSVLFIWYFFFVYVKNLSILQYDKAKVLFIQNNFEPLNNNMLRVPLNILRKRTYVVKNKKNGVPFQIFLSSENDEGLYYELNPENVEKVLNLIRPKLQIDNGDVELVDIKNNDLYIRLLGNCVTCSSNSITVSHVIKKTLKMYIRNEQNQEPNVIITNFDEINEQNIQNCLSQLKPYLDFLKVEVIIKELVNNKENINNYVCLKFLNIENSSEEINIPHNVKNEITERLKQKFPTLTVNFEN.

Belongs to the NifU family. Homodimer.

Its subcellular location is the plastid. It is found in the apicoplast. The protein operates within cofactor biosynthesis; iron-sulfur cluster biosynthesis. Functionally, binds and transfers [4Fe-4S] iron-sulfur clusters to target proteins. The sequence is that of NifU-like scaffold protein from Plasmodium falciparum (isolate 3D7).